The sequence spans 545 residues: Probable zinc metalloprotease EGY2, chloroplastic (545 aa).

A chloroplast-targeting transit peptide spans 1–63 (MQLPAMSCSP…QIRNRRFVCQ (63 aa)). Residues 66-142 (TETEPDGDGN…DATPASDAQE (77 aa)) form a disordered region. A compositionally biased stretch (acidic residues) spans 68-85 (TEPDGDGNGDEEKEELGD). 2 stretches are compositionally biased toward polar residues: residues 88–109 (SSPSVYSVTQENGSAESETNAD) and 117–129 (NTEPLSSSDTVQN). A run of 7 helical transmembrane segments spans residues 256–276 (AVPEWFAAASFGVVTIFTLLL), 300–320 (VYGALVTAAIIGVHEIAHILA), 325–345 (GIKLAVPYFVPSWQIGSFGAI), 363–383 (AAGPLAGFSLGFVLLLLGFIL), 426–446 (PLVLWAWAGLLINAINSIPAG), 473–493 (LLGISALFNDVAFYWVVLIFF), and 513–533 (YISIGVAILLFGLLVCLPYPF).

Belongs to the peptidase M50B family.

Its subcellular location is the plastid. The protein resides in the chloroplast membrane. In terms of biological role, probable membrane-associated metalloprotease that may be involved in chloroplast development. The sequence is that of Probable zinc metalloprotease EGY2, chloroplastic (EGY2) from Oryza sativa subsp. indica (Rice).